The following is a 460-amino-acid chain: V-type ATP synthase beta chain (460 aa).

This sequence belongs to the ATPase alpha/beta chains family.

Functionally, produces ATP from ADP in the presence of a proton gradient across the membrane. The V-type beta chain is a regulatory subunit. This Clostridium perfringens (strain ATCC 13124 / DSM 756 / JCM 1290 / NCIMB 6125 / NCTC 8237 / Type A) protein is V-type ATP synthase beta chain.